Reading from the N-terminus, the 362-residue chain is Meiotic recombination protein SPO11-1 (362 aa).

The region spanning 8–142 (SESTNLLQRI…LNVVSVGNGL (135 aa)) is the Topo IIA-type catalytic domain. Tyrosine 103 (O-(5'-phospho-DNA)-tyrosine intermediate) is an active-site residue. Positions 189 and 241 each coordinate Mg(2+).

The protein belongs to the TOP6A family. As to quaternary structure, heterotetramer of 2 SPO11 (SPO11-1 and/or SPO11-2) and 2 MTOPVIB chains. Interacts with MTOPVIB. May form a heterodimer with SPO11-2. Interacts with PRD1. Does not interact with TOP6B. Requires Mg(2+) as cofactor. Expressed in shoots, young seedlings, flowers and reproductive tissues. Not found in roots or rosette leaves.

Its subcellular location is the nucleus. It carries out the reaction ATP-dependent breakage, passage and rejoining of double-stranded DNA.. Component of a topoisomerase 6 complex specifically required for meiotic recombination. Together with MTOPVIB, mediates DNA cleavage that forms the double-strand breaks (DSB) that initiate meiotic recombination. The complex promotes relaxation of negative and positive supercoiled DNA and DNA decatenation through cleavage and ligation cycles. The protein is Meiotic recombination protein SPO11-1 of Arabidopsis thaliana (Mouse-ear cress).